A 1205-amino-acid chain; its full sequence is Caskin-2 (1205 aa).

6 ANK repeats span residues 48 to 77 (DGFS…SVDI), 81 to 110 (NGMR…SVNA), 114 to 143 (DGQI…NPCH), 147 to 176 (GKKT…CVSL), 188 to 217 (NFTT…EINK), and 220 to 249 (KMGT…DVNI). One can recognise an SH3 domain in the interval 281-347 (SGILKVRALK…PPSIVEVISK (67 aa)). Polar residues-rich tracts occupy residues 377 to 388 (SPGSQLGINPDT) and 398 to 411 (GSES…SGQS). The tract at residues 377–411 (SPGSQLGINPDTSVAGDRHSVGSESSVRSAGSGQS) is disordered. SAM domains lie at 468–531 (KDAE…LIVA) and 537–601 (QIPV…LLDL). Low complexity predominate over residues 666 to 687 (RRSFSQESISSRSQGSGHSQES). Disordered stretches follow at residues 666–689 (RRSF…ESAS), 784–964 (RPGR…QRHL), 984–1054 (QIAA…SQEP), and 1132–1155 (SEAS…KGPP). Residues 823–840 (SSMSSAEGQSPEGQSSVK) show a composition bias toward polar residues. Residues 908 to 919 (ISSQHSSSESIP) show a composition bias toward low complexity. Residues 942–959 (DATSELSPTQESQLQSAE) are compositionally biased toward polar residues. The segment covering 1009 to 1037 (KNEEHDFNLTESDTVKRRPKVKEKEEESP) has biased composition (basic and acidic residues). 2 stretches are compositionally biased toward polar residues: residues 1042–1054 (ANNS…SQEP) and 1137–1155 (REQT…KGPP).

The chain is Caskin-2 (caskin2) from Xenopus laevis (African clawed frog).